A 299-amino-acid polypeptide reads, in one-letter code: Aspartate carbamoyltransferase catalytic subunit (299 aa).

The carbamoyl phosphate site is built by R51 and T52. K79 contacts L-aspartate. Positions 101, 130, and 133 each coordinate carbamoyl phosphate. Residues R163 and R215 each contribute to the L-aspartate site. Positions 256 and 257 each coordinate carbamoyl phosphate.

It belongs to the aspartate/ornithine carbamoyltransferase superfamily. ATCase family. Heterododecamer (2C3:3R2) of six catalytic PyrB chains organized as two trimers (C3), and six regulatory PyrI chains organized as three dimers (R2).

It catalyses the reaction carbamoyl phosphate + L-aspartate = N-carbamoyl-L-aspartate + phosphate + H(+). Its pathway is pyrimidine metabolism; UMP biosynthesis via de novo pathway; (S)-dihydroorotate from bicarbonate: step 2/3. Its function is as follows. Catalyzes the condensation of carbamoyl phosphate and aspartate to form carbamoyl aspartate and inorganic phosphate, the committed step in the de novo pyrimidine nucleotide biosynthesis pathway. The chain is Aspartate carbamoyltransferase catalytic subunit from Ehrlichia chaffeensis (strain ATCC CRL-10679 / Arkansas).